Reading from the N-terminus, the 246-residue chain is MMTENREQSPSYKRVLLKVSGEALMGDGPSGVDPVMVDMVAADIADVVASGVEVCLVVGGGNIFRGLAAAAKGMDRAQGDYAGMLATVINALMLQNALERRGMETRVMTAIQMAAIAEPYIRRRAVRHMEKGRVVIFAAGTGNPFFTTDTAAALRANEMECDALFKGTQVDGVYSADPRRNPDAERYDQLTYLEVLARDLNVMDAAAISLARENKLPIVVFNMHAPGSFGAVMRGEGLFTKIIEAD.

18 to 21 (KVSG) lines the ATP pocket. UMP is bound at residue glycine 60. The ATP site is built by glycine 61 and arginine 65. Residues aspartate 80 and 141-148 (TGNPFFTT) each bind UMP. Residues threonine 168, glutamine 169, tyrosine 174, and aspartate 177 each contribute to the ATP site.

The protein belongs to the UMP kinase family. In terms of assembly, homohexamer.

It is found in the cytoplasm. The enzyme catalyses UMP + ATP = UDP + ADP. It participates in pyrimidine metabolism; CTP biosynthesis via de novo pathway; UDP from UMP (UMPK route): step 1/1. Inhibited by UTP. Its function is as follows. Catalyzes the reversible phosphorylation of UMP to UDP. The chain is Uridylate kinase from Gluconobacter oxydans (strain 621H) (Gluconobacter suboxydans).